The chain runs to 293 residues: Acetylglutamate kinase (293 aa).

Residues 68–69, Arg-90, and Asn-189 contribute to the substrate site; that span reads GG.

It belongs to the acetylglutamate kinase family. ArgB subfamily.

It is found in the cytoplasm. The catalysed reaction is N-acetyl-L-glutamate + ATP = N-acetyl-L-glutamyl 5-phosphate + ADP. It participates in amino-acid biosynthesis; L-arginine biosynthesis; N(2)-acetyl-L-ornithine from L-glutamate: step 2/4. Catalyzes the ATP-dependent phosphorylation of N-acetyl-L-glutamate. The protein is Acetylglutamate kinase of Caldicellulosiruptor bescii (strain ATCC BAA-1888 / DSM 6725 / KCTC 15123 / Z-1320) (Anaerocellum thermophilum).